The primary structure comprises 523 residues: Major facilitator-type transporter psiT2 (523 aa).

Positions 1 to 26 (MSLERSTSPNPTERTSLLSDTASTIS) are enriched in polar residues. The segment at 1 to 45 (MSLERSTSPNPTERTSLLSDTASTISSRDDVEQSSLKQRRTPIPT) is disordered. The next 5 membrane-spanning stretches (helical) occupy residues 88–108 (FYSG…IFML), 125–145 (ALGI…TMML), 149–169 (VCAG…SELT), 175–195 (ALVV…GPLI), and 221–241 (FLPS…GYFF). A glycan (N-linked (GlcNAc...) asparagine) is linked at Asn-269. Transmembrane regions (helical) follow at residues 317-337 (FLMF…FTAV), 352-372 (AFSV…PWVL), and 382-402 (HFCM…NPLA). N-linked (GlcNAc...) asparagine glycosylation occurs at Asn-410. A run of 3 helical transmembrane segments spans residues 419–439 (GLLY…VMAF), 455–474 (LATA…AFCP), and 488–508 (NILG…VGVW).

The protein belongs to the major facilitator superfamily. TCR/Tet family.

Its subcellular location is the membrane. In terms of biological role, major facilitator-type transporter; part of the gene cluster that mediates the biosynthesis of psilocybin, a psychotropic tryptamine-derived natural product. This Psilocybe cubensis (Psychedelic mushroom) protein is Major facilitator-type transporter psiT2.